A 380-amino-acid chain; its full sequence is Succinyl-diaminopimelate desuccinylase (380 aa).

Histidine 69 lines the Zn(2+) pocket. Aspartate 71 is a catalytic residue. Residue aspartate 102 coordinates Zn(2+). Glutamate 135 (proton acceptor) is an active-site residue. Residues glutamate 136, glutamate 164, and histidine 353 each contribute to the Zn(2+) site.

The protein belongs to the peptidase M20A family. DapE subfamily. In terms of assembly, homodimer. It depends on Zn(2+) as a cofactor. Co(2+) is required as a cofactor.

It carries out the reaction N-succinyl-(2S,6S)-2,6-diaminopimelate + H2O = (2S,6S)-2,6-diaminopimelate + succinate. It functions in the pathway amino-acid biosynthesis; L-lysine biosynthesis via DAP pathway; LL-2,6-diaminopimelate from (S)-tetrahydrodipicolinate (succinylase route): step 3/3. Functionally, catalyzes the hydrolysis of N-succinyl-L,L-diaminopimelic acid (SDAP), forming succinate and LL-2,6-diaminopimelate (DAP), an intermediate involved in the bacterial biosynthesis of lysine and meso-diaminopimelic acid, an essential component of bacterial cell walls. This is Succinyl-diaminopimelate desuccinylase from Cereibacter sphaeroides (strain ATCC 17023 / DSM 158 / JCM 6121 / CCUG 31486 / LMG 2827 / NBRC 12203 / NCIMB 8253 / ATH 2.4.1.) (Rhodobacter sphaeroides).